The chain runs to 329 residues: Malate dehydrogenase (329 aa).

NAD(+) is bound at residue 11-17 (GAAGQIA). R92 and R98 together coordinate substrate. Residues N105, Q112, and 129–131 (VGN) each bind NAD(+). Substrate is bound by residues N131 and R162. Residue H187 is the Proton acceptor of the active site.

Belongs to the LDH/MDH superfamily. MDH type 2 family.

The catalysed reaction is (S)-malate + NAD(+) = oxaloacetate + NADH + H(+). Its function is as follows. Catalyzes the reversible oxidation of malate to oxaloacetate. The chain is Malate dehydrogenase from Akkermansia muciniphila (strain ATCC BAA-835 / DSM 22959 / JCM 33894 / BCRC 81048 / CCUG 64013 / CIP 107961 / Muc).